Reading from the N-terminus, the 420-residue chain is COP9 signalosome complex subunit 5 (420 aa).

The MPN domain maps to 73 to 208 (AALSALACMK…IGAFRTMPET (136 aa)). 3 residues coordinate Zn(2+): His-154, His-156, and Asp-167. The JAMM motif signature appears at 154–167 (HSHPGYGCWLSGID).

This sequence belongs to the peptidase M67A family. CSN5 subfamily. Component of the COP9 signalosome (CSN) complex.

The protein localises to the cytoplasm. Its subcellular location is the nucleus. In terms of biological role, catalytic component of the COP9 signalosome (CSN) complex that acts as an regulator of the ubiquitin (Ubl) conjugation pathway by mediating the deneddylation of the cullin subunit of SCF-type E3 ubiquitin-protein ligase complexes. The CSN complex is involved in the regulation of the mating pheromone response. This chain is COP9 signalosome complex subunit 5 (RRI1), found in Eremothecium gossypii (strain ATCC 10895 / CBS 109.51 / FGSC 9923 / NRRL Y-1056) (Yeast).